Reading from the N-terminus, the 46-residue chain is DNA-directed RNA polymerases I, II, and III subunit rpabc4 (46 aa).

Zn(2+) contacts are provided by cysteine 7, cysteine 10, cysteine 24, and cysteine 27. The C4-type zinc finger occupies cysteine 7 to cysteine 27.

This sequence belongs to the archaeal Rpo12/eukaryotic RPC10 RNA polymerase subunit family. As to quaternary structure, component of the RNA polymerase I (Pol I), RNA polymerase II (Pol II) and RNA polymerase III (Pol III) complexes consisting of at least 13, 12 and 17 subunits, respectively.

It localises to the nucleus. In terms of biological role, DNA-dependent RNA polymerase catalyzes the transcription of DNA into RNA using the four ribonucleoside triphosphates as substrates. Common component of RNA polymerases I, II and III which synthesize ribosomal RNA precursors, mRNA precursors and many functional non-coding RNAs, and a small RNAs, such as 5S rRNA and tRNAs, respectively. The polypeptide is DNA-directed RNA polymerases I, II, and III subunit rpabc4 (polr2k) (Dictyostelium discoideum (Social amoeba)).